A 245-amino-acid polypeptide reads, in one-letter code: AP-1-like transcription factor YAP5 (245 aa).

Over residues 34-47 (LPHRAAQRRKRVHR) the composition is skewed to basic residues. The segment at 34–77 (LPHRAAQRRKRVHRLHEDYETEENDEELQKKKRQNRDAQRAYRE) is disordered. Residues 58–121 (DEELQKKKRQ…QAKESENHAL (64 aa)) enclose the bZIP domain. The interval 63-82 (KKKRQNRDAQRAYRERKNNK) is basic motif. Residues 68 to 77 (NRDAQRAYRE) show a composition bias toward basic and acidic residues. Residues 86 to 114 (LEETIESLSKVVKNYETKLNRLQNELQAK) form a leucine-zipper region.

Belongs to the bZIP family. YAP subfamily. As to quaternary structure, homodimer.

Its subcellular location is the cytoplasm. It is found in the nucleus. Functionally, transcription activator involved in the regulation of genes expressed in response to environmental changes and metabolic requirements. According to genome-wide promoter binding and gene expression studies it is a coregulator for the expression of ribosomal genes, while its own expression is induced by the cell cycle specific activator SBF (SWI4-SWI6). The polypeptide is AP-1-like transcription factor YAP5 (YAP5) (Saccharomyces cerevisiae (strain ATCC 204508 / S288c) (Baker's yeast)).